The following is a 132-amino-acid chain: Hydrogenase maturation factor HypA (132 aa).

Histidine 2 is a Ni(2+) binding site. Zn(2+)-binding residues include cysteine 74, cysteine 77, cysteine 91, and cysteine 94.

Belongs to the HypA/HybF family.

Its function is as follows. Involved in the maturation of [NiFe] hydrogenases. Required for nickel insertion into the metal center of the hydrogenase. This Synechococcus sp. (strain JA-2-3B'a(2-13)) (Cyanobacteria bacterium Yellowstone B-Prime) protein is Hydrogenase maturation factor HypA.